Reading from the N-terminus, the 288-residue chain is Glutamate racemase (288 aa).

The disordered stretch occupies residues 1-21 (MAIARQDVNISSPEATTSDAQ). The segment covering 8–21 (VNISSPEATTSDAQ) has biased composition (polar residues). Residues 32 to 33 (DS) and 64 to 65 (YG) contribute to the substrate site. C96 functions as the Proton donor/acceptor in the catalytic mechanism. 97-98 (NT) provides a ligand contact to substrate. The Proton donor/acceptor role is filled by C209. 210 to 211 (TH) serves as a coordination point for substrate.

The protein belongs to the aspartate/glutamate racemases family.

The catalysed reaction is L-glutamate = D-glutamate. The protein operates within cell wall biogenesis; peptidoglycan biosynthesis. In terms of biological role, provides the (R)-glutamate required for cell wall biosynthesis. The chain is Glutamate racemase from Proteus mirabilis (strain HI4320).